Here is a 141-residue protein sequence, read N- to C-terminus: Hemoglobin subunit alpha (141 aa).

The region spanning 1-141 (VLSAADKSNV…VSTVLTSKYR (141 aa)) is the Globin domain. Position 3 is a phosphoserine (serine 3). An N6-succinyllysine mark is found at lysine 7 and lysine 11. The residue at position 16 (lysine 16) is an N6-acetyllysine; alternate. Lysine 16 is modified (N6-succinyllysine; alternate). Residue tyrosine 24 is modified to Phosphotyrosine. A Phosphoserine modification is found at serine 35. At lysine 40 the chain carries N6-succinyllysine. A Phosphoserine modification is found at serine 49. Histidine 58 provides a ligand contact to O2. Position 87 (histidine 87) interacts with heme b. Serine 102 is modified (phosphoserine). Threonine 108 carries the post-translational modification Phosphothreonine. A Phosphoserine modification is found at serine 124. A phosphothreonine mark is found at threonine 134 and threonine 137. Position 138 is a phosphoserine (serine 138).

It belongs to the globin family. In terms of assembly, heterotetramer of two alpha chains and two beta chains. In terms of tissue distribution, red blood cells.

Involved in oxygen transport from the lung to the various peripheral tissues. Functionally, hemopressin acts as an antagonist peptide of the cannabinoid receptor CNR1. Hemopressin-binding efficiently blocks cannabinoid receptor CNR1 and subsequent signaling. The chain is Hemoglobin subunit alpha (HBA) from Felis catus (Cat).